The chain runs to 78 residues: Putative defensin-like protein 288 (78 aa).

The signal sequence occupies residues 1-21 (MSNLRLTIAVFLAALFQTLWW).

It belongs to the DEFL family.

Its subcellular location is the secreted. This is Putative defensin-like protein 288 from Arabidopsis thaliana (Mouse-ear cress).